The sequence spans 77 residues: U8-lycotoxin-Ls1r (77 aa).

Residues 1–20 (MKLIIFTGLVLFAIVSLIEA) form the signal peptide. Residues 21 to 26 (QAENEK) constitute a propeptide that is removed on maturation.

This sequence belongs to the neurotoxin 19 (CSTX) family. 08 (U8-Lctx) subfamily. Contains 4 disulfide bonds. As to expression, expressed by the venom gland.

The protein localises to the secreted. In Lycosa singoriensis (Wolf spider), this protein is U8-lycotoxin-Ls1r.